Consider the following 299-residue polypeptide: Ribosome-inactivating protein saporin-6 (299 aa).

An N-terminal signal peptide occupies residues 1–24 (MKIYVVATIAWILLQFSAWTTTDA). Glu200 is a catalytic residue. Residues 278-299 (SSNEANSTVRHYGPLKPTLLIT) constitute a propeptide that is removed on maturation. N-linked (GlcNAc...) asparagine glycosylation is present at Asn283.

This sequence belongs to the ribosome-inactivating protein family. Type 1 RIP subfamily. In terms of tissue distribution, seeds and leaves of the plant.

The catalysed reaction is Endohydrolysis of the N-glycosidic bond at one specific adenosine on the 28S rRNA.. In terms of biological role, ribosome-inactivating protein of type 1, inhibits protein synthesis in animal cells. Useful as immunotoxin for pharmacological applications. The protein is Ribosome-inactivating protein saporin-6 (SAP6) of Saponaria officinalis (Common soapwort).